A 362-amino-acid polypeptide reads, in one-letter code: MSAPVFDPATYDAQLAEKQQRLIELLAPFAAPEPEVFDSPREHYRLRAEFRLWREDGQRHYAMFAPGDKHTPILLDDFPIASLRINELMPRLRAAWRASEALSFKLFQVEFLTTLAGDALITLAYHRPLDEAWQAAAEKLASELNVSLVGRSRGQRLVIGRDYVEEELTVAGRRFRYRQPEGAFTQPNGAVCEKMLGWAYEALGERDDDLLELYCGNGNFTLPLATRVRRVLATEISKTSVNAALANLADNGVNNVELVRLSAEELTQALNEVRPFRRLAGIDLKSYDFGSVFVDPPRAGMDPDTCELTRRFERILYISCNPETLAANIAQLSDTHQVTRCALFDQFPYTHHMEAGVLLERR.

S-adenosyl-L-methionine-binding residues include Gln-186, Tyr-214, Asn-219, Glu-235, and Asp-295. The active-site Nucleophile is Cys-320. The active-site Proton acceptor is the Glu-354.

This sequence belongs to the class I-like SAM-binding methyltransferase superfamily. RNA M5U methyltransferase family. TrmA subfamily.

The catalysed reaction is uridine(54) in tRNA + S-adenosyl-L-methionine = 5-methyluridine(54) in tRNA + S-adenosyl-L-homocysteine + H(+). The enzyme catalyses uridine(341) in tmRNA + S-adenosyl-L-methionine = 5-methyluridine(341) in tmRNA + S-adenosyl-L-homocysteine + H(+). In terms of biological role, dual-specificity methyltransferase that catalyzes the formation of 5-methyluridine at position 54 (m5U54) in all tRNAs, and that of position 341 (m5U341) in tmRNA (transfer-mRNA). The sequence is that of tRNA/tmRNA (uracil-C(5))-methyltransferase from Ectopseudomonas mendocina (strain ymp) (Pseudomonas mendocina).